The sequence spans 762 residues: Coleoptile phototropism protein 1 (762 aa).

Basic and acidic residues predominate over residues 1-12 (MWESESESHGGE). The segment at 1–29 (MWESESESHGGERGLVPVGGGGGSGRHEA) is disordered. The BTB domain occupies 51–128 (SDLLVKVGDV…SYGMAVDLTA (78 aa)). Gly residues predominate over residues 227 to 238 (PAAIRGGGGSGG). Disordered stretches follow at residues 227-264 (PAAI…RQAV), 460-495 (MAVA…ASAS), 687-718 (QVDG…AWSS), and 731-762 (GADA…NSIS). Residues 268–607 (DWWFEDVSVL…VQVLFTEQVK (340 aa)) enclose the NPH3 domain. Positions 654-691 (AAAKKDINTLKFELESMKAKYLELQHEMDALQKQVDGR) form a coiled coil. Over residues 696–709 (PSPAAAKIGKQQQQ) the composition is skewed to low complexity. Gly residues predominate over residues 736 to 747 (AGGGVAPPGGGE). Over residues 752–762 (KGPRRWRNSIS) the composition is skewed to basic residues.

This sequence belongs to the NPH3 family.

It functions in the pathway protein modification; protein ubiquitination. Functionally, may act as a substrate-specific adapter of an E3 ubiquitin-protein ligase complex (CUL3-RBX1-BTB) which mediates the ubiquitination and subsequent proteasomal degradation of target proteins. Plays a role as signal transduction component in coleoptile phototropism and lateral translocation of auxin. The chain is Coleoptile phototropism protein 1 (CPT1) from Oryza sativa subsp. japonica (Rice).